A 671-amino-acid polypeptide reads, in one-letter code: DNA ligase (671 aa).

Residues 35–39, 84–85, and glutamate 113 each bind NAD(+); these read DQQYD and SL. Lysine 115 (N6-AMP-lysine intermediate) is an active-site residue. NAD(+) contacts are provided by arginine 136, glutamate 170, lysine 285, and lysine 309. 4 residues coordinate Zn(2+): cysteine 403, cysteine 406, cysteine 421, and cysteine 426. Positions 588-671 constitute a BRCT domain; sequence TTQTIFTNKK…QIIENSQIKL (84 aa).

The protein belongs to the NAD-dependent DNA ligase family. LigA subfamily. It depends on Mg(2+) as a cofactor. Requires Mn(2+) as cofactor.

The catalysed reaction is NAD(+) + (deoxyribonucleotide)n-3'-hydroxyl + 5'-phospho-(deoxyribonucleotide)m = (deoxyribonucleotide)n+m + AMP + beta-nicotinamide D-nucleotide.. Functionally, DNA ligase that catalyzes the formation of phosphodiester linkages between 5'-phosphoryl and 3'-hydroxyl groups in double-stranded DNA using NAD as a coenzyme and as the energy source for the reaction. It is essential for DNA replication and repair of damaged DNA. In Onion yellows phytoplasma (strain OY-M), this protein is DNA ligase.